Reading from the N-terminus, the 487-residue chain is N-succinylglutamate 5-semialdehyde dehydrogenase (487 aa).

The interval Met1–Ala23 is disordered. Residue Gly220 to Gly225 participates in NAD(+) binding. Active-site residues include Glu243 and Cys277.

It belongs to the aldehyde dehydrogenase family. AstD subfamily.

The enzyme catalyses N-succinyl-L-glutamate 5-semialdehyde + NAD(+) + H2O = N-succinyl-L-glutamate + NADH + 2 H(+). The protein operates within amino-acid degradation; L-arginine degradation via AST pathway; L-glutamate and succinate from L-arginine: step 4/5. Functionally, catalyzes the NAD-dependent reduction of succinylglutamate semialdehyde into succinylglutamate. The chain is N-succinylglutamate 5-semialdehyde dehydrogenase from Shewanella oneidensis (strain ATCC 700550 / JCM 31522 / CIP 106686 / LMG 19005 / NCIMB 14063 / MR-1).